We begin with the raw amino-acid sequence, 1179 residues long: Protein turtle homolog A (1179 aa).

A signal peptide spans 1-20; the sequence is MIWCLRLTVLSLIISQGADG. Residues 21–734 lie on the Extracellular side of the membrane; sequence RRKPEVVSVV…TQLPGLLPQP (714 aa). Ig-like domains lie at 24–124, 136–216, 226–318, 322–410, and 418–502; these read PEVV…DFAN, PQFQ…GSIT, PPVI…AYLT, PAQV…SPVT, and PAFI…TNVY. 2 disulfides stabilise this stretch: cysteine 41-cysteine 108 and cysteine 158-cysteine 206. 3 N-linked (GlcNAc...) asparagine glycosylation sites follow: asparagine 188, asparagine 239, and asparagine 256. 3 disulfides stabilise this stretch: cysteine 248–cysteine 301, cysteine 344–cysteine 395, and cysteine 440–cysteine 486. 2 consecutive Fibronectin type-III domains span residues 507–611 and 623–718; these read SPHV…TTPA and PLSP…TSGL. 2 N-linked (GlcNAc...) asparagine glycosylation sites follow: asparagine 513 and asparagine 524. A helical transmembrane segment spans residues 735–755; it reads VLAGVVGGVCFLGVAVLVSIL. Residues 756 to 1179 lie on the Cytoplasmic side of the membrane; sequence AACLMNRRRA…ISYPEQATLL (424 aa). Residues 767–807 form a disordered region; the sequence is RRHRKRLRQDPPLIFSPRGKSGSHSAPGSGSPDSVTKFKLQ. The span at 785–800 shows a compositional bias: low complexity; the sequence is GKSGSHSAPGSGSPDS. Residue serine 809 is modified to Phosphoserine. 3 disordered regions span residues 819 to 842, 942 to 974, and 1016 to 1079; these read LWGEPARPPSPHPDSPLGRGPLPL, PPLEEPTPAPPPDFMDSQPCPTSSFLPPPDSPP, and APRG…KRRN. Residues 944-954 show a composition bias toward pro residues; the sequence is LEEPTPAPPPD. Residues 1020–1029 show a composition bias toward polar residues; sequence SLTSQSSGRG. Residues 1177–1179 carry the PDZ-binding motif; that stretch reads TLL.

This sequence belongs to the immunoglobulin superfamily. Turtle family. In terms of assembly, interacts with MAGI2 and SHANK1. In terms of tissue distribution, expressed in both cell bodies and dendrites of cortical and hippocampal neurons and also cerebellar Purkinje cells (at protein level).

The protein resides in the cell membrane. It is found in the synapse. Its function is as follows. Functions in dendrite outgrowth and synapse maturation. The protein is Protein turtle homolog A (Igsf9) of Mus musculus (Mouse).